The sequence spans 214 residues: Probable transaldolase (214 aa).

The active-site Schiff-base intermediate with substrate is lysine 83.

This sequence belongs to the transaldolase family. Type 3B subfamily.

The protein resides in the cytoplasm. It carries out the reaction D-sedoheptulose 7-phosphate + D-glyceraldehyde 3-phosphate = D-erythrose 4-phosphate + beta-D-fructose 6-phosphate. It functions in the pathway carbohydrate degradation; pentose phosphate pathway; D-glyceraldehyde 3-phosphate and beta-D-fructose 6-phosphate from D-ribose 5-phosphate and D-xylulose 5-phosphate (non-oxidative stage): step 2/3. In terms of biological role, transaldolase is important for the balance of metabolites in the pentose-phosphate pathway. The chain is Probable transaldolase from Streptococcus equi subsp. equi (strain 4047).